The chain runs to 181 residues: UPF0316 protein Bcer98_2136 (181 aa).

Helical transmembrane passes span 6–26 (LIFV…ILLV), 32–52 (SAAG…GIVF), and 58–78 (WMNI…GGYI).

It belongs to the UPF0316 family.

The protein resides in the cell membrane. The polypeptide is UPF0316 protein Bcer98_2136 (Bacillus cytotoxicus (strain DSM 22905 / CIP 110041 / 391-98 / NVH 391-98)).